The chain runs to 369 residues: VYPHFKTPIQCRFLTSDSISIRRRTAVSRWRSPTFSANYNGVNAQVLGVLKQEQKEIEEEKRSSSLAEKLRLGSLTEDGLSYKEKFIVRCYEVGINKTATVETIANLLQEVGGNHAQSVGFSTDGFATTPTMRKLHLIWVTARMHIEIYRYPAWSDVVEIETWCQSEGRIGTRRDWIIKDFATDEVIGRATSKWVMMNQDTRRLQKVSDDVRDEYLVFCPKTPRLSFPEENNKSLKKISKLEDPAQHSRLGLSPRRADLDMNQHVNNVAYIGWVLESIPKEVLYTHELETITLDYRRECQHDDVVDSLTSPEVDEDTAVTKIIGTNGHAAAATEARDDSLKFLHFLRVSGQGLEINRGRTEWRKKSEKR.

Catalysis depends on residues asparagine 262, histidine 264, and cysteine 299.

It belongs to the acyl-ACP thioesterase family.

It is found in the plastid. The protein resides in the chloroplast. The catalysed reaction is (9Z)-octadecenoyl-[ACP] + H2O = (9Z)-octadecenoate + holo-[ACP] + H(+). In terms of biological role, plays an essential role in chain termination during de novo fatty acid synthesis. High thioesterase activity for oleoyl-ACP versus other acyl-ACPs. The polypeptide is Oleoyl-acyl carrier protein thioesterase, chloroplastic (FATA) (Coriandrum sativum (Coriander)).